The sequence spans 250 residues: U6 snRNA phosphodiesterase 1 (250 aa).

Residues 1-31 (MALVSYSSSEEDEGETSEPPGRRLPPLPPPT) are disordered. Over residues 22–31 (RRLPPLPPPT) the composition is skewed to pro residues. Catalysis depends on histidine 105, which acts as the Proton acceptor. Residue 105–107 (HIS) coordinates AMP. Residues glutamine 149, tyrosine 187, and 191-195 (SFHVS) each bind UMP. AMP contacts are provided by residues tyrosine 187 and 189–195 (EPSFHVS). The Proton donor role is filled by histidine 193.

This sequence belongs to the 2H phosphoesterase superfamily. USB1 family.

The protein resides in the nucleus. The enzyme catalyses a 3'-end uridylyl-uridine-RNA = a 3'-end 2',3'-cyclophospho-uridine-RNA + uridine. The catalysed reaction is a 3'-end uridylyl-adenosine-RNA = a 3'-end 2',3'-cyclophospho-uridine-RNA + adenosine. 3'-5' RNA exonuclease that trims the 3' end of oligo(U) and oligo(A) tracts of the pre-U6 small nuclear RNA (snRNA) molecule, leading to the formation of a mature U6 snRNA 3' end-terminated with a 2',3'-cyclic phosphate. Participates in the U6 snRNA 3' end processing that prevents U6 snRNA degradation. In addition also removes uridines from the 3' end of U6atac snRNA and possibly the vault RNA VTRNA1-1. The chain is U6 snRNA phosphodiesterase 1 from Xenopus laevis (African clawed frog).